The primary structure comprises 965 residues: Transmembrane channel-like protein 5 (965 aa).

Polar residues-rich tracts occupy residues 1-10 (MSSFHKNSSY) and 20-31 (SGSQNHTQNYLR). Residues 1 to 235 (MSSFHKNSSY…GAEEGDVYSP (235 aa)) are disordered. Topologically, residues 1–417 (MSSFHKNSSY…YFSFLRWLLK (417 aa)) are extracellular. Basic and acidic residues predominate over residues 61–70 (TNPDYHHSLA). Residues 166 to 181 (QGNSYHSGPRSHSNLP) are compositionally biased toward polar residues. A Phosphoserine modification is found at Ser-248. A helical transmembrane segment spans residues 418 to 438 (FNIFSFVMNFSFIIIPQFTVG). The Cytoplasmic portion of the chain corresponds to 439–444 (EKNTLQ). The helical transmembrane segment at 445-467 (FTGLEFFTGAGYFRETVMYYGFY) threads the bilayer. Topologically, residues 468–484 (TNSTIRHRMGGASYNMQ) are extracellular. Residues 485–505 (LAYIFTIGACLVICFFSLLFS) form a helical membrane-spanning segment. Residues 506–578 (MAKYFRNNFI…NQKLTRFSVH (73 aa)) lie on the Cytoplasmic side of the membrane. The helical transmembrane segment at 579–599 (VAAWLVSTGITAACCVAVYYL) threads the bilayer. At 600–613 (AEYNSEFLKTHKNP) the chain is on the extracellular side. The helical transmembrane segment at 614–634 (GAVLLLPFVVSCINLAVPRFY) threads the bilayer. Residues 635–657 (SMFRLVERYEIPRQEVYVLLIRN) are Cytoplasmic-facing. A helical membrane pass occupies residues 658-678 (IFLKISIVGILCYYWLNIVAL). Residues 679 to 691 (SGEECWETLIGQD) are Extracellular-facing. A helical transmembrane segment spans residues 692–712 (IYRLLLMDFVFSLADSLLGEF). Topologically, residues 713 to 747 (LRRLIGMKFITSLSLQEFDIARNVLELIYAQTLAW) are cytoplasmic. A helical transmembrane segment spans residues 748 to 768 (LGIFFCPLLPFIQMITLFIMF). Topologically, residues 769-794 (YVKNVSLMMNFQPPSKAWRASQMITF) are extracellular. Residues 795–815 (FIFLLFFPSFTGVLCTLAITI) traverse the membrane as a helical segment. The Cytoplasmic portion of the chain corresponds to 816-859 (WRLKPSADCGPFRGLPSFIQSIYSWIDTLSHRPGYLWVVWIYQN). The chain crosses the membrane as a helical span at residues 860–880 (LIGSVHFFFILTLIVLIITYL). The Extracellular portion of the chain corresponds to 881-965 (YWQITEGRKV…RSMQEENAIA (85 aa)).

It belongs to the TMC family.

The protein resides in the membrane. In terms of biological role, probable component of an ion channel. Molecular function hasn't been characterized yet. The protein is Transmembrane channel-like protein 5 of Rattus norvegicus (Rat).